We begin with the raw amino-acid sequence, 126 residues long: Holo-[acyl-carrier-protein] synthase (126 aa).

Aspartate 9 and glutamate 58 together coordinate Mg(2+).

Belongs to the P-Pant transferase superfamily. AcpS family. It depends on Mg(2+) as a cofactor.

It is found in the cytoplasm. It carries out the reaction apo-[ACP] + CoA = holo-[ACP] + adenosine 3',5'-bisphosphate + H(+). Functionally, transfers the 4'-phosphopantetheine moiety from coenzyme A to a Ser of acyl-carrier-protein. The protein is Holo-[acyl-carrier-protein] synthase of Pectobacterium carotovorum subsp. carotovorum (strain PC1).